Reading from the N-terminus, the 336-residue chain is N-acetyl-gamma-glutamyl-phosphate reductase (336 aa).

Residue Cys148 is part of the active site.

Belongs to the NAGSA dehydrogenase family. Type 1 subfamily.

The protein resides in the cytoplasm. The catalysed reaction is N-acetyl-L-glutamate 5-semialdehyde + phosphate + NADP(+) = N-acetyl-L-glutamyl 5-phosphate + NADPH + H(+). It functions in the pathway amino-acid biosynthesis; L-arginine biosynthesis; N(2)-acetyl-L-ornithine from L-glutamate: step 3/4. In terms of biological role, catalyzes the NADPH-dependent reduction of N-acetyl-5-glutamyl phosphate to yield N-acetyl-L-glutamate 5-semialdehyde. This Campylobacter curvus (strain 525.92) protein is N-acetyl-gamma-glutamyl-phosphate reductase.